The following is a 364-amino-acid chain: tRNA 2-selenouridine synthase (364 aa).

Residues 14-137 (LIADTPIIDV…LRQTAIQATI (124 aa)) enclose the Rhodanese domain. C97 serves as the catalytic S-selanylcysteine intermediate.

Belongs to the SelU family. Monomer.

It catalyses the reaction 5-methylaminomethyl-2-thiouridine(34) in tRNA + selenophosphate + (2E)-geranyl diphosphate + H2O + H(+) = 5-methylaminomethyl-2-selenouridine(34) in tRNA + (2E)-thiogeraniol + phosphate + diphosphate. It carries out the reaction 5-methylaminomethyl-2-thiouridine(34) in tRNA + (2E)-geranyl diphosphate = 5-methylaminomethyl-S-(2E)-geranyl-thiouridine(34) in tRNA + diphosphate. The enzyme catalyses 5-methylaminomethyl-S-(2E)-geranyl-thiouridine(34) in tRNA + selenophosphate + H(+) = 5-methylaminomethyl-2-(Se-phospho)selenouridine(34) in tRNA + (2E)-thiogeraniol. The catalysed reaction is 5-methylaminomethyl-2-(Se-phospho)selenouridine(34) in tRNA + H2O = 5-methylaminomethyl-2-selenouridine(34) in tRNA + phosphate. Functionally, involved in the post-transcriptional modification of the uridine at the wobble position (U34) of tRNA(Lys), tRNA(Glu) and tRNA(Gln). Catalyzes the conversion of 2-thiouridine (S2U-RNA) to 2-selenouridine (Se2U-RNA). Acts in a two-step process involving geranylation of 2-thiouridine (S2U) to S-geranyl-2-thiouridine (geS2U) and subsequent selenation of the latter derivative to 2-selenouridine (Se2U) in the tRNA chain. The sequence is that of tRNA 2-selenouridine synthase from Escherichia coli O6:K15:H31 (strain 536 / UPEC).